Reading from the N-terminus, the 818-residue chain is Cytosolic phospholipase A2 delta (818 aa).

In terms of domain architecture, C2 spans S5–F124. Positions 38, 44, 94, 96, and 102 each coordinate Ca(2+). Residues G273–T818 enclose the PLA2c domain. G330–G331 serves as a coordination point for substrate. S361 serves as the catalytic Nucleophile. The active-site Proton acceptor is the D647.

It depends on Ca(2+) as a cofactor. Expressed in stratified squamous epithelia, such as those in skin and cervix, but not in other tissues. Strongly expressed in the upper spinous layer of the psoriatic epidermis, expressed weakly and discontinuously in atopic dermatitis and mycosis fungoides, and not detected in the epidermis of normal skin.

The protein resides in the cytoplasm. The protein localises to the cytosol. Its subcellular location is the membrane. It carries out the reaction a 1,2-diacyl-sn-glycero-3-phosphocholine + H2O = a 1-acyl-sn-glycero-3-phosphocholine + a fatty acid + H(+). The enzyme catalyses 1-hexadecanoyl-2-(5Z,8Z,11Z,14Z-eicosatetraenoyl)-sn-glycero-3-phosphocholine + H2O = 1-hexadecanoyl-sn-glycero-3-phosphocholine + (5Z,8Z,11Z,14Z)-eicosatetraenoate + H(+). The catalysed reaction is 1-hexadecanoyl-2-(9Z,12Z-octadecadienoyl)-sn-glycero-3-phosphocholine + H2O = (9Z,12Z)-octadecadienoate + 1-hexadecanoyl-sn-glycero-3-phosphocholine + H(+). It catalyses the reaction 1-hexadecanoyl-2-(9Z-octadecenoyl)-sn-glycero-3-phosphocholine + H2O = 1-hexadecanoyl-sn-glycero-3-phosphocholine + (9Z)-octadecenoate + H(+). It carries out the reaction 1-hexadecanoyl-2-(5Z,8Z,11Z,14Z-eicosatetraenoyl)-sn-glycero-3-phosphoethanolamine + H2O = 1-hexadecanoyl-sn-glycero-3-phosphoethanolamine + (5Z,8Z,11Z,14Z)-eicosatetraenoate + H(+). The enzyme catalyses 1-hexadecanoyl-2-(9Z,12Z-octadecadienoyl)-sn-glycero-3-phosphoethanolamine + H2O = 1-hexadecanoyl-sn-glycero-3-phosphoethanolamine + (9Z,12Z)-octadecadienoate + H(+). It participates in lipid metabolism; fatty acid metabolism. Stimulated by cytosolic Ca(2+). In terms of biological role, calcium-dependent phospholipase A2 that selectively hydrolyzes glycerophospholipids in the sn-2 position. Has a preference for linoleic acid at the sn-2 position. The sequence is that of Cytosolic phospholipase A2 delta from Homo sapiens (Human).